Here is a 285-residue protein sequence, read N- to C-terminus: Urease accessory protein UreD 1 (285 aa).

It belongs to the UreD family. As to quaternary structure, ureD, UreF and UreG form a complex that acts as a GTP-hydrolysis-dependent molecular chaperone, activating the urease apoprotein by helping to assemble the nickel containing metallocenter of UreC. The UreE protein probably delivers the nickel.

The protein resides in the cytoplasm. Its function is as follows. Required for maturation of urease via the functional incorporation of the urease nickel metallocenter. The sequence is that of Urease accessory protein UreD 1 from Pseudomonas syringae pv. syringae (strain B728a).